Consider the following 382-residue polypeptide: Acetylxylan esterase A (382 aa).

An N-terminal signal peptide occupies residues 1-21 (MKSLSFSFLVTLFLYLTLSSA). A propeptide spanning residues 22–31 (RTLGKDVNKR) is cleaved from the precursor. Residues 35–307 (GSLQQVTGFG…GAKDMEWFGF (273 aa)) form a catalytic region. Asn46 is a glycosylation site (N-linked (GlcNAc...) asparagine). Residue Ser152 is the Charge relay system of the active site. Asn194 is a glycosylation site (N-linked (GlcNAc...) asparagine). The interval 308 to 345 (SGSGSSSTTTASATKTSTTSTTSTKTTSSTSSTTTSST) is ser/Thr-rich linker. Residues 313–345 (SSTTTASATKTSTTSTTSTKTTSSTSSTTTSST) are compositionally biased toward low complexity. The interval 313-346 (SSTTTASATKTSTTSTTSTKTTSSTSSTTTSSTG) is disordered. Residues 346 to 382 (GVAAHWGQCGGSGWTGPTVCESGYTCTYSNAWYSQCL) enclose the CBM1 domain.

The protein belongs to the carbohydrate esterase 1 (CE1) family. AxeA subfamily. In terms of assembly, monomer. In terms of processing, glycosylated.

It is found in the secreted. The enzyme catalyses Deacetylation of xylans and xylo-oligosaccharides.. Its pathway is glycan degradation; xylan degradation. Its activity is regulated as follows. Inactivated by phenylmethylsulfonylfluorid (PMSF), a specific inhibitor of serine esterases. Its function is as follows. Acetylxylan esterase involved in the hydrolysis of xylan, a major structural heterogeneous polysaccharide found in plant biomass representing the second most abundant polysaccharide in the biosphere, after cellulose. Degrades acetylated xylans by cleaving acetyl side groups from the hetero-xylan backbone. This is Acetylxylan esterase A (axeA) from Talaromyces purpureogenus (Soft rot fungus).